The sequence spans 238 residues: Uridylate kinase (238 aa).

12 to 15 (KLSG) contacts ATP. G54 is a binding site for UMP. Residues G55 and R59 each contribute to the ATP site. UMP is bound by residues D74 and 135–142 (TGNPFFTT). Residues T162, Y168, and D171 each coordinate ATP.

This sequence belongs to the UMP kinase family. Homohexamer.

It is found in the cytoplasm. The enzyme catalyses UMP + ATP = UDP + ADP. The protein operates within pyrimidine metabolism; CTP biosynthesis via de novo pathway; UDP from UMP (UMPK route): step 1/1. Inhibited by UTP. In terms of biological role, catalyzes the reversible phosphorylation of UMP to UDP. This Bordetella bronchiseptica (strain ATCC BAA-588 / NCTC 13252 / RB50) (Alcaligenes bronchisepticus) protein is Uridylate kinase.